The primary structure comprises 180 residues: Adipocyte-related X-chromosome expressed sequence 1 (180 aa).

The Cytoplasmic segment spans residues 1 to 11; the sequence is MNSLLSRANSL. A helical; Signal-anchor for type II membrane protein membrane pass occupies residues 12-32; that stretch reads FAFTLSVMAALTLGCILTTAF. At 33–180 the chain is on the lumenal side; sequence KDRSAPVRLH…PDSYEIATTF (148 aa). Asparagine 141 carries an N-linked (GlcNAc...) asparagine glycan.

It belongs to the SPCS3 family. As to expression, strongly expressed in epididymal white and brown adipose tissue with low levels in heart.

The protein localises to the endoplasmic reticulum membrane. Its function is as follows. Plays a role in adipogenesis. This Mus musculus (Mouse) protein is Adipocyte-related X-chromosome expressed sequence 1.